Reading from the N-terminus, the 579-residue chain is CTP synthase (579 aa).

The amidoligase domain stretch occupies residues 1 to 281; the sequence is MPALRKHPQT…DAYVVRRLNL (281 aa). Serine 23 is a CTP binding site. Serine 23 contributes to the UTP binding site. ATP-binding positions include 24–29 and aspartate 81; that span reads SLGKGL. Mg(2+)-binding residues include aspartate 81 and glutamate 155. CTP contacts are provided by residues 162–164, 202–207, and lysine 238; these read DIE and KTKPTQ. Residues 202 to 207 and lysine 238 each bind UTP; that span reads KTKPTQ. Residues 306 to 554 form the Glutamine amidotransferase type-1 domain; the sequence is RIALVGKYID…IGAALDYKAA (249 aa). Glycine 369 lines the L-glutamine pocket. Cysteine 396 serves as the catalytic Nucleophile; for glutamine hydrolysis. Residues 397 to 400, glutamate 419, and arginine 480 contribute to the L-glutamine site; that span reads LGLQ. Residues histidine 527 and glutamate 529 contribute to the active site.

The protein belongs to the CTP synthase family. In terms of assembly, homotetramer.

It carries out the reaction UTP + L-glutamine + ATP + H2O = CTP + L-glutamate + ADP + phosphate + 2 H(+). It catalyses the reaction L-glutamine + H2O = L-glutamate + NH4(+). The enzyme catalyses UTP + NH4(+) + ATP = CTP + ADP + phosphate + 2 H(+). It participates in pyrimidine metabolism; CTP biosynthesis via de novo pathway; CTP from UDP: step 2/2. With respect to regulation, allosterically activated by GTP, when glutamine is the substrate; GTP has no effect on the reaction when ammonia is the substrate. The allosteric effector GTP functions by stabilizing the protein conformation that binds the tetrahedral intermediate(s) formed during glutamine hydrolysis. Inhibited by the product CTP, via allosteric rather than competitive inhibition. Catalyzes the ATP-dependent amination of UTP to CTP with either L-glutamine or ammonia as the source of nitrogen. Regulates intracellular CTP levels through interactions with the four ribonucleotide triphosphates. This chain is CTP synthase, found in Mycobacterium sp. (strain KMS).